Reading from the N-terminus, the 358-residue chain is Methylthioribose-1-phosphate isomerase (358 aa).

Residues 54–56 (RGA), arginine 96, and glutamine 205 each bind substrate. Residue aspartate 246 is the Proton donor of the active site. 256 to 257 (NK) provides a ligand contact to substrate.

It belongs to the eIF-2B alpha/beta/delta subunits family. MtnA subfamily.

The enzyme catalyses 5-(methylsulfanyl)-alpha-D-ribose 1-phosphate = 5-(methylsulfanyl)-D-ribulose 1-phosphate. It functions in the pathway amino-acid biosynthesis; L-methionine biosynthesis via salvage pathway; L-methionine from S-methyl-5-thio-alpha-D-ribose 1-phosphate: step 1/6. Its function is as follows. Catalyzes the interconversion of methylthioribose-1-phosphate (MTR-1-P) into methylthioribulose-1-phosphate (MTRu-1-P). The chain is Methylthioribose-1-phosphate isomerase from Pseudomonas syringae pv. syringae (strain B728a).